Reading from the N-terminus, the 197-residue chain is Protein-S-isoprenylcysteine O-methyltransferase A (197 aa).

3 helical membrane passes run 16-36, 52-72, and 81-101; these read MLLSLIFFHISEYILAITIHG, ALAMLLSLLEYLTEIILFPGL, and FGLIMIIVGEIIRKAAIITAG. Residues 116–119, Tyr-124, and 129–132 contribute to the S-adenosyl-L-methionine site; these read HGLV and HPSY. A helical transmembrane segment spans residues 140–160; the sequence is VGTQVMLCNPVSAVAFAVVVW. Arg-166 contacts substrate. Glu-170 contacts S-adenosyl-L-methionine.

It belongs to the class VI-like SAM-binding methyltransferase superfamily. Isoprenylcysteine carboxyl methyltransferase family. Zn(2+) is required as a cofactor. As to expression, expressed primarily in flowers, stems, leaves and roots. Almost not expressed in siliques. Detected in root tips and vascular tissues of roots, cotyledons, petiols, hypocotyls, filaments, pollen grains and the distal and proximal portions of the gynoecium.

The protein localises to the endoplasmic reticulum membrane. It catalyses the reaction [protein]-C-terminal S-[(2E,6E)-farnesyl]-L-cysteine + S-adenosyl-L-methionine = [protein]-C-terminal S-[(2E,6E)-farnesyl]-L-cysteine methyl ester + S-adenosyl-L-homocysteine. With respect to regulation, inhibited by farnesylthioacetic acid (FTAA) and N-acetyl-S-trans, trans-farnesyl-l-cysteine (AFC). In terms of biological role, catalyzes the post-translational methylation of isoprenylated C-terminal cysteine residues, resulting in the modulation of the function of prenylated proteins. Involved in negative regulation of abscisic acid signaling. Carboxyl methylation is a reversible and potentially regulated step in the post-translational modification of prenylated proteins. This is Protein-S-isoprenylcysteine O-methyltransferase A from Arabidopsis thaliana (Mouse-ear cress).